We begin with the raw amino-acid sequence, 92 residues long: Small ribosomal subunit protein bS20 (92 aa).

The tract at residues 1–23 (MANTPSAKKRAKQAEKRRSHNAS) is disordered. Residues 7–20 (AKKRAKQAEKRRSH) show a composition bias toward basic residues.

This sequence belongs to the bacterial ribosomal protein bS20 family.

Binds directly to 16S ribosomal RNA. The sequence is that of Small ribosomal subunit protein bS20 from Pseudomonas entomophila (strain L48).